The following is a 251-amino-acid chain: Aspartate/glutamate leucyltransferase (251 aa).

This sequence belongs to the R-transferase family. Bpt subfamily.

It localises to the cytoplasm. It carries out the reaction N-terminal L-glutamyl-[protein] + L-leucyl-tRNA(Leu) = N-terminal L-leucyl-L-glutamyl-[protein] + tRNA(Leu) + H(+). The catalysed reaction is N-terminal L-aspartyl-[protein] + L-leucyl-tRNA(Leu) = N-terminal L-leucyl-L-aspartyl-[protein] + tRNA(Leu) + H(+). Its function is as follows. Functions in the N-end rule pathway of protein degradation where it conjugates Leu from its aminoacyl-tRNA to the N-termini of proteins containing an N-terminal aspartate or glutamate. In Stenotrophomonas maltophilia (strain K279a), this protein is Aspartate/glutamate leucyltransferase.